Here is a 1906-residue protein sequence, read N- to C-terminus: DENN domain-containing protein 4C (1906 aa).

The MABP domain maps to 40-199 (KAPITDIAVI…NVFLCYKKSV (160 aa)). Residues 191–363 (VFLCYKKSVP…NIPFPSPQRP (173 aa)) form the uDENN domain. Positions 384-520 (PLPLSGANFS…PCKSLLGTLR (137 aa)) constitute a cDENN domain. In terms of domain architecture, dDENN spans 522–640 (LYQQLCSVHR…CSFVSDKDTG (119 aa)). A phosphoserine mark is found at S702, S736, and S740. Residues 818–852 (DEVCYRVVMQLCGLWVNPVLAVRVLFEMKTARIKP) form a PPR repeat. The span at 904–917 (SQVFSISGGQSDQG) shows a compositional bias: polar residues. Disordered stretches follow at residues 904–942 (SQVF…PPEL) and 963–984 (LQPT…SIVK). Over residues 920–939 (SKDELVKEGADGHAPEEHTP) the composition is skewed to basic and acidic residues. A Phosphothreonine modification is found at T966. A compositionally biased stretch (pro residues) spans 966-975 (TPEPQSPTEP). S971 bears the Phosphoserine mark. T973 carries the phosphothreonine modification. Phosphoserine occurs at positions 987, 1000, 1043, 1058, 1096, and 1123. Polar residues predominate over residues 1154 to 1171 (NSLQSNSHSDQSRDTQAG). Positions 1154–1184 (NSLQSNSHSDQSRDTQAGAQDPVNKRSSSYA) are disordered. Phosphoserine is present on residues S1181, S1221, S1240, S1248, and S1274. The segment at 1246–1317 (SCSMELHGEG…PQSPYRAYKD (72 aa)) is disordered. Residues 1281–1291 (PPARDSTETEK) are compositionally biased toward basic and acidic residues. Over residues 1292–1302 (SSPAVSSSKTL) the composition is skewed to polar residues. S1321, S1333, and S1342 each carry phosphoserine. Disordered stretches follow at residues 1410–1440 (SPNT…GDVG), 1548–1577 (STSG…SAEP), and 1596–1628 (ASYT…LSKR). The span at 1423–1437 (LTQSNTSLGSSSSSG) shows a compositional bias: low complexity. Polar residues-rich tracts occupy residues 1548 to 1564 (STSG…SASE) and 1611 to 1628 (GDVQ…LSKR). Phosphoserine is present on residues S1620, S1624, S1626, S1637, and S1796.

Phosphorylated in response to insulin.

Its subcellular location is the cytoplasmic vesicle membrane. It localises to the cell membrane. The protein localises to the cytoplasm. It is found in the cytosol. Its function is as follows. Guanine nucleotide exchange factor (GEF) activating RAB10. Promotes the exchange of GDP to GTP, converting inactive GDP-bound RAB10 into its active GTP-bound form. Thereby, stimulates SLC2A4/GLUT4 glucose transporter-enriched vesicles delivery to the plasma membrane in response to insulin. This is DENN domain-containing protein 4C (Dennd4c) from Mus musculus (Mouse).